The primary structure comprises 155 residues: 3-dehydroquinate dehydratase (155 aa).

Catalysis depends on tyrosine 32, which acts as the Proton acceptor. 3 residues coordinate substrate: asparagine 84, histidine 90, and aspartate 97. The Proton donor role is filled by histidine 110. Substrate-binding positions include leucine 111–serine 112 and arginine 121.

Belongs to the type-II 3-dehydroquinase family. As to quaternary structure, homododecamer.

It catalyses the reaction 3-dehydroquinate = 3-dehydroshikimate + H2O. It functions in the pathway metabolic intermediate biosynthesis; chorismate biosynthesis; chorismate from D-erythrose 4-phosphate and phosphoenolpyruvate: step 3/7. Its function is as follows. Catalyzes a trans-dehydration via an enolate intermediate. This chain is 3-dehydroquinate dehydratase, found in Ralstonia pickettii (strain 12J).